The following is a 293-amino-acid chain: NAD kinase (293 aa).

Asp-74 serves as the catalytic Proton acceptor. NAD(+) contacts are provided by residues 74–75 (DG), 148–149 (NE), His-159, Arg-176, Asp-178, Thr-186, 189–194 (TAYSLS), and Gln-248.

It belongs to the NAD kinase family. In terms of assembly, homodimer. It depends on a divalent metal cation as a cofactor.

The protein localises to the cytoplasm. It catalyses the reaction NAD(+) + ATP = ADP + NADP(+) + H(+). Functionally, involved in the regulation of the intracellular balance of NAD and NADP, and is a key enzyme in the biosynthesis of NADP. Catalyzes specifically the phosphorylation on 2'-hydroxyl of the adenosine moiety of NAD to yield NADP. This is NAD kinase from Yersinia pestis.